Here is a 356-residue protein sequence, read N- to C-terminus: NAC domain-containing protein JA2L (356 aa).

The NAC domain maps to 14-162 (LPPGFRFYPT…DWVLCRIYKK (149 aa)). The DNA-binding element occupies 111–168 (VGIKKALVFYIGKAPKGTKTNWIMHEYRLSEPTTKTGSSRLDDWVLCRIYKKNSGGQK). The interval 163-191 (NSGGQKSSCSDLQNKDISHASSSSSSSQF) is disordered. Positions 164 to 174 (SGGQKSSCSDL) are enriched in polar residues.

Expressed in guard cells of the epidermis.

The protein resides in the nucleus. Its function is as follows. Transcription factor that acts downstream of MYC2 in the jasmonate-mediated response to Botrytis cinerea infection. With MYC2 forms a transcription module that regulates wounding-responsive genes. Involved in jasmonate- and coronatine-mediated stomatal reopening in response to Pseudomonas syringae pv tomato DC3000 infection. Regulates the expression of threonine deaminase 2 (TD2) through promoter binding. This Solanum lycopersicum (Tomato) protein is NAC domain-containing protein JA2L.